The sequence spans 292 residues: Hemin import ATP-binding protein HmuV (292 aa).

The ABC transporter domain occupies 38-271 (LRADGIAVTR…ELLTRVYGHP (234 aa)). ATP is bound at residue 70-77 (GPNGAGKS).

Belongs to the ABC transporter superfamily. Heme (hemin) importer (TC 3.A.1.14.5) family. The complex is composed of two ATP-binding proteins (HmuV), two transmembrane proteins (HmuU) and a solute-binding protein (HmuT).

The protein resides in the cell membrane. Part of the ABC transporter complex HmuTUV involved in hemin import. Responsible for energy coupling to the transport system. This is Hemin import ATP-binding protein HmuV from Rhodococcus jostii (strain RHA1).